We begin with the raw amino-acid sequence, 520 residues long: Keratin, type II cytoskeletal 8 (520 aa).

Low complexity predominate over residues 1-19; sequence MSTYSKKTSYTVKSSSSGS. A disordered region spans residues 1–20; the sequence is MSTYSKKTSYTVKSSSSGSI. A head region spans residues 2-114; sequence STYSKKTSYT…DPNIQIVRTQ (113 aa). Ser-28 carries the phosphoserine modification. Positions 115-150 are coil 1A; it reads EKEQIKTLNNRFASFIDKVRFLEQQNKMLETKWSLL. Positions 115–426 constitute an IF rod domain; sequence EKEQIKTLNN…KLLEGEEDRL (312 aa). A linker 1 region spans residues 151 to 166; the sequence is QNQTATRSNIDAMFEA. A coil 1B region spans residues 168-259; sequence IANLRRQLDS…QIFEEEIREL (92 aa). The segment at 260 to 283 is linker 12; the sequence is QSQIKDTSVVVEMDNSRNLDMDAI. The tract at residues 284-422 is coil 2; sequence VAEVRAQYED…ATYRKLLEGE (139 aa). The tail stretch occupies residues 423 to 520; that stretch reads EDRLATGIKA…VSESSEVVQD (98 aa).

Belongs to the intermediate filament family. As to quaternary structure, heterotetramer of two type I and two type II keratins. Keratin-8 associates with keratin-18. In terms of tissue distribution, expressed in simple epithelia.

The protein localises to the cytoplasm. Its subcellular location is the nucleus. It is found in the nucleoplasm. The protein resides in the nucleus matrix. Together with KRT19, helps to link the contractile apparatus to dystrophin at the costameres of striated muscle. The polypeptide is Keratin, type II cytoskeletal 8 (Danio rerio (Zebrafish)).